The chain runs to 341 residues: GDP-fucose transporter 1 (341 aa).

Transmembrane regions (helical) follow at residues 17–37, 41–61, 71–91, 103–123, 132–152, 156–176, 187–207, 231–251, 260–280, and 283–303; these read LVIG…LAIT, YPGL…YLLG, FTWD…LAIF, DTFI…DTVF, LTFL…ATDS, LTAY…MVYI, IWGL…VFWF, AFSS…FGFA, AFTV…VLIW, and HATP…VGYQ. The interval 316–341 is disordered; the sequence is SEKDSEKGEEDEELTQLVPGKLASVV.

It belongs to the nucleotide-sugar transporter family. GDP-Mannose:GMP antiporter (GMA) (TC 2.A.7.13) subfamily. In terms of tissue distribution, ubiquitous.

Its subcellular location is the golgi apparatus membrane. Functionally, acts as the major nucleotide-sugar transporter for the import of GDP-Fucose into the Golgi lumen. Transports GDP-Fucose in a strict counter-exchange mode. Is required for proper plant growth and development. Also acts as a GDP-mannose transporter that may be involved in the import of GDP-mannose from the cytoplasm into the Golgi lumen. This is GDP-fucose transporter 1 from Arabidopsis thaliana (Mouse-ear cress).